Consider the following 321-residue polypeptide: Olfactory receptor 5K4 (321 aa).

The Extracellular portion of the chain corresponds to 1-25 (MARENHSLAAEFILIGFTNYPELKT). An N-linked (GlcNAc...) asparagine glycan is attached at Asn-5. The helical transmembrane segment at 26–46 (LLFVVFSAIYLVTMVGNLGLV) threads the bilayer. Residues 47 to 54 (ALIYVERR) are Cytoplasmic-facing. A helical transmembrane segment spans residues 55–75 (LLTPMYIFLGNLALMDSCCSC). The Extracellular portion of the chain corresponds to 76 to 97 (AVTPKMLENFFSEDRIISLYEC). Cys-97 and Cys-179 form a disulfide bridge. A helical membrane pass occupies residues 98–118 (MAQFYFLCLAETTDCFLLATM). Over 119-139 (AYDRYVAICHPLQYHTMMSKT) the chain is Cytoplasmic. A helical membrane pass occupies residues 140–160 (LCIRMTTGAFKAGNLHSMIHV). Residues 161–205 (GLLLRLTFCRSNKIHHFFCDILPLYRLSCTDPSINELMIYIFSIP) are Extracellular-facing. A helical transmembrane segment spans residues 206–226 (IQIFTIATVLISYLCILLTVF). The Cytoplasmic portion of the chain corresponds to 227-240 (KMKSKEGRGKAFST). Residues 241–261 (CASHFLSVSIFYICLLMYIGP) traverse the membrane as a helical segment. The Extracellular segment spans residues 262–268 (SEEGDKD). Residues 269–289 (TPVAIFYAIVIPLLNPFIYSL) form a helical membrane-spanning segment. The Cytoplasmic segment spans residues 290 to 321 (RNKEVINVLKKIMRNYNILKQTCSIANLFLIY).

The protein belongs to the G-protein coupled receptor 1 family.

The protein localises to the cell membrane. Odorant receptor. The sequence is that of Olfactory receptor 5K4 (OR5K4) from Homo sapiens (Human).